Here is a 622-residue protein sequence, read N- to C-terminus: DNA mismatch repair protein MutL (622 aa).

It belongs to the DNA mismatch repair MutL/HexB family.

Functionally, this protein is involved in the repair of mismatches in DNA. It is required for dam-dependent methyl-directed DNA mismatch repair. May act as a 'molecular matchmaker', a protein that promotes the formation of a stable complex between two or more DNA-binding proteins in an ATP-dependent manner without itself being part of a final effector complex. The sequence is that of DNA mismatch repair protein MutL from Phenylobacterium zucineum (strain HLK1).